The primary structure comprises 213 residues: ATP-dependent Clp protease proteolytic subunit (213 aa).

The active-site Nucleophile is S114. H139 is an active-site residue.

The protein belongs to the peptidase S14 family. Fourteen ClpP subunits assemble into 2 heptameric rings which stack back to back to give a disk-like structure with a central cavity, resembling the structure of eukaryotic proteasomes.

The protein localises to the cytoplasm. The enzyme catalyses Hydrolysis of proteins to small peptides in the presence of ATP and magnesium. alpha-casein is the usual test substrate. In the absence of ATP, only oligopeptides shorter than five residues are hydrolyzed (such as succinyl-Leu-Tyr-|-NHMec, and Leu-Tyr-Leu-|-Tyr-Trp, in which cleavage of the -Tyr-|-Leu- and -Tyr-|-Trp bonds also occurs).. Cleaves peptides in various proteins in a process that requires ATP hydrolysis. Has a chymotrypsin-like activity. Plays a major role in the degradation of misfolded proteins. The chain is ATP-dependent Clp protease proteolytic subunit from Pseudomonas putida (strain ATCC 47054 / DSM 6125 / CFBP 8728 / NCIMB 11950 / KT2440).